We begin with the raw amino-acid sequence, 61 residues long: UPF0391 membrane protein Bpro_0066 (61 aa).

A run of 2 helical transmembrane segments spans residues 5–25 (AIIF…GVAA) and 33–53 (ILFG…ALGV).

Belongs to the UPF0391 family.

It localises to the cell membrane. The polypeptide is UPF0391 membrane protein Bpro_0066 (Polaromonas sp. (strain JS666 / ATCC BAA-500)).